The primary structure comprises 938 residues: Isoleucine--tRNA ligase (938 aa).

The 'HIGH' region motif lies at 58-68 (PYANGSIHIGH). Residue Lys183 is modified to N6-acetyllysine. Glu561 serves as a coordination point for L-isoleucyl-5'-AMP. Residues 602-606 (KMSKS) carry the 'KMSKS' region motif. Lys605 lines the ATP pocket. Residues Cys901, Cys904, Cys921, and Cys924 each coordinate Zn(2+).

Belongs to the class-I aminoacyl-tRNA synthetase family. IleS type 1 subfamily. As to quaternary structure, monomer. It depends on Zn(2+) as a cofactor.

The protein localises to the cytoplasm. It carries out the reaction tRNA(Ile) + L-isoleucine + ATP = L-isoleucyl-tRNA(Ile) + AMP + diphosphate. Catalyzes the attachment of isoleucine to tRNA(Ile). As IleRS can inadvertently accommodate and process structurally similar amino acids such as valine, to avoid such errors it has two additional distinct tRNA(Ile)-dependent editing activities. One activity is designated as 'pretransfer' editing and involves the hydrolysis of activated Val-AMP. The other activity is designated 'posttransfer' editing and involves deacylation of mischarged Val-tRNA(Ile). This chain is Isoleucine--tRNA ligase, found in Escherichia coli O45:K1 (strain S88 / ExPEC).